The sequence spans 718 residues: Acetolactate synthase, mitochondrial (718 aa).

Disordered regions lie at residues 1–53 (MLTR…YDTP) and 75–99 (QSSA…QAAP). A compositionally biased stretch (polar residues) spans 32 to 45 (RYSNNIHTSSTQNA). The segment covering 76–99 (SSASTAAASPAVRPQPAQHFQAAP) has biased composition (low complexity). Glutamate 173 is a binding site for thiamine diphosphate. Arginine 275 is a binding site for FAD. The segment at 301-326 (VQPGHSPYLPSNPLNPSSQPSDPLPG) is disordered. Over residues 306 to 325 (SPYLPSNPLNPSSQPSDPLP) the composition is skewed to low complexity. Residues 397-418 (HGSA…LGVR) and 449-468 (EIQP…VLGD) each bind FAD. The tract at residues 541–621 (QHQMWACQYY…VKVLLFNNEF (81 aa)) is thiamine pyrophosphate binding. Residues aspartate 592 and asparagine 619 each coordinate Mg(2+).

Belongs to the TPP enzyme family. It depends on Mg(2+) as a cofactor. Thiamine diphosphate is required as a cofactor.

It localises to the mitochondrion. It carries out the reaction 2 pyruvate + H(+) = (2S)-2-acetolactate + CO2. It functions in the pathway amino-acid biosynthesis; L-isoleucine biosynthesis; L-isoleucine from 2-oxobutanoate: step 1/4. Its pathway is amino-acid biosynthesis; L-valine biosynthesis; L-valine from pyruvate: step 1/4. The chain is Acetolactate synthase, mitochondrial (ILV2) from Cryptococcus neoformans var. grubii serotype A (strain H99 / ATCC 208821 / CBS 10515 / FGSC 9487) (Filobasidiella neoformans var. grubii).